The sequence spans 586 residues: Phosphatase and actin regulator 1 (586 aa).

The Nuclear localization signal motif lies at 62–83 (RRRSKFATLGRLFKPWKWRKKK). One copy of the RPEL 1 repeat lies at 92–117 (AALERKISMRQSREELIKRGVLKEMY). The disordered stretch occupies residues 373–414 (ECEDDKENVPHETSYDDSSCLYSRDEEEDDDDDDDDEDDDSS). A compositionally biased stretch (acidic residues) spans 397–413 (DEEEDDDDDDDDEDDDS). 3 RPEL repeats span residues 428–453 (DSLA…PMQT), 466–491 (TKLT…KPRN), and 504–529 (RRLT…ISFS).

It belongs to the phosphatase and actin regulator family. In terms of assembly, interacts (via RPEL repeats) with ACTA1.

Its subcellular location is the cytoplasm. The protein localises to the synapse. It localises to the nucleus. Binds actin monomers (G actin) and plays a role in the reorganization of the actin cytoskeleton and in formation of actin stress fibers. This Xenopus laevis (African clawed frog) protein is Phosphatase and actin regulator 1 (phactr1).